The primary structure comprises 498 residues: Glutamate--tRNA ligase (498 aa).

Positions 11-21 match the 'HIGH' region motif; that stretch reads PSPTGHLHIGN. Positions 260-264 match the 'KMSKS' region motif; that stretch reads KLSKR. Lys263 serves as a coordination point for ATP.

This sequence belongs to the class-I aminoacyl-tRNA synthetase family. Glutamate--tRNA ligase type 1 subfamily. In terms of assembly, monomer.

The protein localises to the cytoplasm. It catalyses the reaction tRNA(Glu) + L-glutamate + ATP = L-glutamyl-tRNA(Glu) + AMP + diphosphate. In terms of biological role, catalyzes the attachment of glutamate to tRNA(Glu) in a two-step reaction: glutamate is first activated by ATP to form Glu-AMP and then transferred to the acceptor end of tRNA(Glu). The chain is Glutamate--tRNA ligase from Leuconostoc citreum (strain KM20).